The chain runs to 590 residues: V-type ATP synthase alpha chain (590 aa).

Residue 231-238 (GPFGSGKT) participates in ATP binding.

The protein belongs to the ATPase alpha/beta chains family.

It carries out the reaction ATP + H2O + 4 H(+)(in) = ADP + phosphate + 5 H(+)(out). In terms of biological role, produces ATP from ADP in the presence of a proton gradient across the membrane. The V-type alpha chain is a catalytic subunit. This Clostridium botulinum (strain Langeland / NCTC 10281 / Type F) protein is V-type ATP synthase alpha chain.